We begin with the raw amino-acid sequence, 147 residues long: Leghemoglobin 6 (147 aa).

The 146-residue stretch at 2–147 (SFTDKQEALV…LATEIKKAMS (146 aa)) folds into the Globin domain. Tyr25 and Tyr30 each carry nitrated tyrosine. Heme b is bound at residue Ser45. Residue Ser45 is modified to Phosphoserine. His62 is a binding site for O2. The heme b site is built by Lys65, His94, and Lys97. Tyr135 carries the nitrated tyrosine modification.

This sequence belongs to the plant globin family. As to quaternary structure, monomer. Nitrated in effective nodules and particularly in hypoxic conditions; this mechanism may play a protective role in the symbiosis by buffering toxic peroxynitrite NO(2)(-). Nitration level decrease during nodule senescence. Post-translationally, phosphorylation at Ser-45 disrupts the molecular environment of its porphyrin ring oxygen binding pocket, thus leading to a reduced oxygen consumption and to the delivery of oxygen O(2) to symbiosomes. As to expression, root nodules.

It is found in the cytoplasm. It localises to the cytosol. Its subcellular location is the nucleus. In terms of biological role, leghemoglobin that reversibly binds oxygen O(2) through a pentacoordinated heme iron. In root nodules, facilitates the diffusion of oxygen to the bacteroids while preventing the bacterial nitrogenase from being inactivated by buffering dioxygen, nitric oxide and carbon monoxide, and promoting the formation of reactive oxygen species (ROS, e.g. H(2)O(2)). This role is essential for symbiotic nitrogen fixation (SNF). The polypeptide is Leghemoglobin 6 (Medicago truncatula (Barrel medic)).